The chain runs to 256 residues: MYPNRHRRASFCSQPRTYPRNSLIRQQSLFKRNVSKRRPFQTVKMVDDSMMKAQRIHENQYGPDFSLAHNTAVSTFISYPDIAKSLPNRTRSYIKLKRLRFKGIVKVERVHVEVNMDCSVPKTEGVFSLVIVVDRKPHLGPSGGLPTFDELFGARIHSHGNLAIVPSLKDRFYIRHVLKRVISVEKDTMMVDIEGVVALSSRRFNCWAGFKDLDIESRKGVYDNINKNALLVYYCWMSDTVSKASTFVSFDLDYIG.

A Bipartite nuclear localization signal motif is present at residues 21–42 (NSLIRQQSLFKRNVSKRRPFQT). The short motif at 81-96 (DIAKSLPNRTRSYIKL) is the Nuclear localization signal element. The tract at residues 150–187 (ELFGARIHSHGNLAIVPSLKDRFYIRHVLKRVISVEKD) is interaction with Arabidopsis thaliana NSI protein.

It belongs to the begomovirus nuclear shuttle protein family. Binds to single-stranded and double-stranded viral DNA. Interacts with the host nuclear shuttle interacting (NSI) protein. This interaction may allow NSP to recruit NSI monomers to the viral genome and thus regulate nuclear export of viral genome by NSP.

Its subcellular location is the host nucleus. The protein localises to the host cytoplasm. The protein resides in the host cell membrane. In terms of biological role, binds to the genomic viral ssDNA, shuttles it into and out of the cell nucleus. Begomoviruses use 2 proteins to transport their DNA from cell to cell. The nuclear shuttle protein (NSP) shuttles it between nucleus and cytoplasm and the movement protein (MP) probably transports the DNA-NSP complex to the cell periphery and facilitates movement across the cell wall. The chain is Nuclear shuttle protein from Potato yellow mosaic virus (isolate Venezuela) (PYMV).